The following is a 715-amino-acid chain: Patatin-like phospholipase domain-containing protein ATEG_02594 (715 aa).

The helical transmembrane segment at 84 to 104 (WPFLAFVLGWISFLGVAYILT) threads the bilayer. In terms of domain architecture, PNPLA spans 274–465 (LCLSGGATFA…RTDIPIKALN (192 aa)). A GXSXG motif is present at residues 305–309 (GTSGG). Catalysis depends on S307, which acts as the Nucleophile. D452 (proton acceptor) is an active-site residue. The segment at 613–715 (TAPRGGGRAT…DVDSDTWKGQ (103 aa)) is disordered. A compositionally biased stretch (basic and acidic residues) spans 652–661 (RTGEYSKEAD). The span at 665–678 (AEMSDSSGVDSATA) shows a compositional bias: polar residues.

This sequence belongs to the PLPL family.

Its subcellular location is the membrane. Its function is as follows. Probable lipid hydrolase. The sequence is that of Patatin-like phospholipase domain-containing protein ATEG_02594 from Aspergillus terreus (strain NIH 2624 / FGSC A1156).